The following is a 397-amino-acid chain: Mannonate dehydratase (397 aa).

The protein belongs to the mannonate dehydratase family. Fe(2+) serves as cofactor. The cofactor is Mn(2+).

The enzyme catalyses D-mannonate = 2-dehydro-3-deoxy-D-gluconate + H2O. It functions in the pathway carbohydrate metabolism; pentose and glucuronate interconversion. Its function is as follows. Catalyzes the dehydration of D-mannonate. The chain is Mannonate dehydratase from Yersinia pestis bv. Antiqua (strain Angola).